A 258-amino-acid chain; its full sequence is MIMLNIGPFSFHSRLLLGTGKFPDFDVQQKAIDVSEAEILTFAVRRMDIFDAKQPNLLEKLDVKKYTLLPNTAGAKNAEEAVRIAKLAKASGLCDMIKVEVIGDDRTLLPDPVETLKASEMLLEEGFIVLPYTSDDVVLARKLQELGVHAIMPGASPIGSGLGIVNPLNLSFIIEQATVPVIVDAGIGSPADAAFAMELGADGVLLNTAVSGAKDPIKMAQAMKLSIEAGRLGFEAVRIARKRCATASSPLEGMSVVE.

K98 (schiff-base intermediate with DXP) is an active-site residue. 1-deoxy-D-xylulose 5-phosphate contacts are provided by residues G159, 185-186 (AG), and 207-208 (NT).

This sequence belongs to the ThiG family. As to quaternary structure, homotetramer. Forms heterodimers with either ThiH or ThiS.

Its subcellular location is the cytoplasm. It catalyses the reaction [ThiS sulfur-carrier protein]-C-terminal-Gly-aminoethanethioate + 2-iminoacetate + 1-deoxy-D-xylulose 5-phosphate = [ThiS sulfur-carrier protein]-C-terminal Gly-Gly + 2-[(2R,5Z)-2-carboxy-4-methylthiazol-5(2H)-ylidene]ethyl phosphate + 2 H2O + H(+). It functions in the pathway cofactor biosynthesis; thiamine diphosphate biosynthesis. Its function is as follows. Catalyzes the rearrangement of 1-deoxy-D-xylulose 5-phosphate (DXP) to produce the thiazole phosphate moiety of thiamine. Sulfur is provided by the thiocarboxylate moiety of the carrier protein ThiS. In vitro, sulfur can be provided by H(2)S. The sequence is that of Thiazole synthase from Bacillus cereus (strain ATCC 14579 / DSM 31 / CCUG 7414 / JCM 2152 / NBRC 15305 / NCIMB 9373 / NCTC 2599 / NRRL B-3711).